Here is a 136-residue protein sequence, read N- to C-terminus: Large-conductance mechanosensitive channel (136 aa).

The Cytoplasmic portion of the chain corresponds to 1–16; sequence MGLLSEFKAFAVKGNV. Residues 17–45 traverse the membrane as a helical segment; the sequence is VDMAVGIIIGAAFGKIVSSFVGDVIMPPI. The Extracellular portion of the chain corresponds to 46 to 73; that stretch reads GLLIGGVDFSDLAITLKAEGDVPAVVLA. Residues 74 to 93 form a helical membrane-spanning segment; that stretch reads YRKFIQTVLNFVIVAFAIFM. Topologically, residues 94–136 are cytoplasmic; it reads GVKAINRLKREEAVAPSEPPVPSAEETLLTEIRDLLKAQQNKS.

It belongs to the MscL family. As to quaternary structure, homopentamer.

It localises to the cell inner membrane. In terms of biological role, channel that opens in response to stretch forces in the membrane lipid bilayer. Forms a nonselective ion channel with a conductance of about 4 nanosiemens. May participate in the regulation of osmotic pressure changes within the cell. In Pseudomonas fluorescens, this protein is Large-conductance mechanosensitive channel.